Consider the following 131-residue polypeptide: Small ribosomal subunit protein bS6 (131 aa).

A disordered region spans residues 96–131 (ITEASPMAKAKDERDSRRGPAGDRSYDEANAEEIAE). Positions 104-122 (KAKDERDSRRGPAGDRSYD) are enriched in basic and acidic residues.

The protein belongs to the bacterial ribosomal protein bS6 family.

Binds together with bS18 to 16S ribosomal RNA. This Shewanella oneidensis (strain ATCC 700550 / JCM 31522 / CIP 106686 / LMG 19005 / NCIMB 14063 / MR-1) protein is Small ribosomal subunit protein bS6.